We begin with the raw amino-acid sequence, 345 residues long: uncharacterized protein (345 aa).

Disordered stretches follow at residues 1 to 24 (MGLE…ENRK) and 296 to 345 (MTAH…LNES). The segment covering 304-323 (SDYDNDDDTDGIINETDYEL) has biased composition (acidic residues). The span at 324–345 (DTSQSEFATLTTSSNKSILNES) shows a compositional bias: polar residues.

This is an uncharacterized protein from Schizosaccharomyces pombe (strain 972 / ATCC 24843) (Fission yeast).